The following is a 330-amino-acid chain: L-tryptophan isonitrile synthase AmbI2 (330 aa).

It belongs to the isocyanide synthase family.

It catalyses the reaction D-ribulose 5-phosphate + L-tryptophan = (2S)-3-(1H-indol-3-yl)-2-isocyanopropanoate + hydroxyacetone + formaldehyde + phosphate + H2O + H(+). Its function is as follows. Involved in the biosynthesis of ambiguines, a family of hapalindole-type alkaloids. Responsible for the synthesis of the isonitrile group on tryptophan using ribulose 5-phosphate as the source of the carbon atom. This chain is L-tryptophan isonitrile synthase AmbI2, found in Fischerella ambigua (strain UTEX 1903).